A 199-amino-acid polypeptide reads, in one-letter code: dITP/XTP pyrophosphatase (199 aa).

12–17 contacts substrate; the sequence is SGNAGK. The active-site Proton acceptor is aspartate 73. Aspartate 73 serves as a coordination point for Mg(2+). Substrate contacts are provided by residues serine 74, 157–160, lysine 180, and 185–186; these read FGYD and HR.

Belongs to the HAM1 NTPase family. Homodimer. Mg(2+) is required as a cofactor.

The catalysed reaction is XTP + H2O = XMP + diphosphate + H(+). It carries out the reaction dITP + H2O = dIMP + diphosphate + H(+). It catalyses the reaction ITP + H2O = IMP + diphosphate + H(+). Its function is as follows. Pyrophosphatase that catalyzes the hydrolysis of nucleoside triphosphates to their monophosphate derivatives, with a high preference for the non-canonical purine nucleotides XTP (xanthosine triphosphate), dITP (deoxyinosine triphosphate) and ITP. Seems to function as a house-cleaning enzyme that removes non-canonical purine nucleotides from the nucleotide pool, thus preventing their incorporation into DNA/RNA and avoiding chromosomal lesions. This chain is dITP/XTP pyrophosphatase, found in Neisseria meningitidis serogroup B (strain ATCC BAA-335 / MC58).